Here is a 273-residue protein sequence, read N- to C-terminus: Nucleotide-binding protein TTHA0319 (273 aa).

Residue 8–15 (GLSGAGKT) coordinates ATP. GTP is bound at residue 57-60 (DARA).

This sequence belongs to the RapZ-like family.

Functionally, displays ATPase and GTPase activities. In Thermus thermophilus (strain ATCC 27634 / DSM 579 / HB8), this protein is Nucleotide-binding protein TTHA0319.